A 385-amino-acid polypeptide reads, in one-letter code: 5'-AMP-activated protein kinase catalytic subunit alpha-1 (385 aa).

The region spanning 1 to 229 (DGRVKIGHYI…IKDIREHEWF (229 aa)) is the Protein kinase domain. Thr14 is modified (phosphothreonine). ATP is bound at residue 15 to 22 (LGVGTFGK). Residue Asp100 is the Proton acceptor of the active site. Residue Thr133 is modified to Phosphothreonine; by LKB1 and CaMKK2. Thr219 and Thr276 each carry phosphothreonine. The interval 252-297 (EALKQDPLAVAYHLIIDNRDFYLATSPPDSFLDDHHLTRVPFLVAE) is AIS. Ser277 is subject to Phosphoserine. A Phosphoserine; by ULK1 modification is found at Ser281. The residue at position 289 (Thr289) is a Phosphothreonine; by ULK1. At Thr298 the chain carries Phosphothreonine. Ser353 and Ser383 each carry phosphoserine.

This sequence belongs to the protein kinase superfamily. CAMK Ser/Thr protein kinase family. SNF1 subfamily. AMPK is a heterotrimer of an alpha catalytic subunit (PRKAA1 or PRKAA2), a beta (PRKAB1 or PRKAB2) and a gamma non-catalytic subunits (PRKAG1, PRKAG2 or PRKAG3). Interacts with FNIP1 and FNIP2. The cofactor is Mg(2+). Post-translationally, ubiquitinated. Phosphorylated at Thr-133 by STK11/LKB1 in complex with STE20-related adapter-alpha (STRADA) pseudo kinase and CAB39. Also phosphorylated at Thr-133 by CAMKK2; triggered by a rise in intracellular calcium ions, without detectable changes in the AMP/ATP ratio. CAMKK1 can also phosphorylate Thr-133, but at a much lower level. Dephosphorylated by protein phosphatase 2A and 2C (PP2A and PP2C). Phosphorylated by ULK1 and ULK2; leading to negatively regulate AMPK activity and suggesting the existence of a regulatory feedback loop between ULK1, ULK2 and AMPK. Dephosphorylated by PPM1A and PPM1B. In terms of processing, glycosylated; O-GlcNAcylated by OGT, promoting the AMP-activated protein kinase (AMPK) activity.

Its subcellular location is the cytoplasm. The protein localises to the nucleus. The enzyme catalyses L-seryl-[protein] + ATP = O-phospho-L-seryl-[protein] + ADP + H(+). It carries out the reaction L-threonyl-[protein] + ATP = O-phospho-L-threonyl-[protein] + ADP + H(+). The catalysed reaction is L-seryl-[acetyl-CoA carboxylase] + ATP = O-phospho-L-seryl-[acetyl-CoA carboxylase] + ADP + H(+). It catalyses the reaction L-seryl-[3-hydroxy-3-methylglutaryl-coenzyme A reductase] + ATP = O-phospho-L-seryl-[3-hydroxy-3-methylglutaryl-coenzyme A reductase] + ADP + H(+). The enzyme catalyses L-seryl-[tau protein] + ATP = O-phospho-L-seryl-[tau protein] + ADP + H(+). It carries out the reaction L-threonyl-[tau protein] + ATP = O-phospho-L-threonyl-[tau protein] + ADP + H(+). Activated by phosphorylation on Thr-133. Binding of AMP to non-catalytic gamma subunit (PRKAG1, PRKAG2 or PRKAG3) results in allosteric activation, inducing phosphorylation on Thr-133. AMP-binding to gamma subunit also sustains activity by preventing dephosphorylation of Thr-133. ADP also stimulates Thr-133 phosphorylation, without stimulating already phosphorylated AMPK. ATP promotes dephosphorylation of Thr-133, rendering the enzyme inactive. Under physiological conditions AMPK mainly exists in its inactive form in complex with ATP, which is much more abundant than AMP. Selectively inhibited by compound C (6-[4-(2-Piperidin-1-yl-ethoxy)-phenyl)]-3-pyridin-4-yl-pyyrazolo[1,5-a] pyrimidine. Activated by resveratrol, a natural polyphenol present in red wine, and S17834, a synthetic polyphenol. Functionally, catalytic subunit of AMP-activated protein kinase (AMPK), an energy sensor protein kinase that plays a key role in regulating cellular energy metabolism. In response to reduction of intracellular ATP levels, AMPK activates energy-producing pathways and inhibits energy-consuming processes: inhibits protein, carbohydrate and lipid biosynthesis, as well as cell growth and proliferation. AMPK acts via direct phosphorylation of metabolic enzymes, and by longer-term effects via phosphorylation of transcription regulators. Regulates lipid synthesis by phosphorylating and inactivating lipid metabolic enzymes such as ACACA, ACACB, GYS1, HMGCR and LIPE; regulates fatty acid and cholesterol synthesis by phosphorylating acetyl-CoA carboxylase (ACACA and ACACB) and hormone-sensitive lipase (LIPE) enzymes, respectively. Promotes lipolysis of lipid droplets by mediating phosphorylation of isoform 1 of CHKA (CHKalpha2). Regulates insulin-signaling and glycolysis by phosphorylating IRS1, PFKFB2 and PFKFB3. AMPK stimulates glucose uptake in muscle by increasing the translocation of the glucose transporter SLC2A4/GLUT4 to the plasma membrane, possibly by mediating phosphorylation of TBC1D4/AS160. Regulates transcription and chromatin structure by phosphorylating transcription regulators involved in energy metabolism such as CRTC2/TORC2, FOXO3, histone H2B, HDAC5, MEF2C, MLXIPL/ChREBP, EP300, HNF4A, p53/TP53, SREBF1, SREBF2 and PPARGC1A. Acts as a key regulator of glucose homeostasis in liver by phosphorylating CRTC2/TORC2, leading to CRTC2/TORC2 sequestration in the cytoplasm. In response to stress, phosphorylates 'Ser-36' of histone H2B (H2BS36ph), leading to promote transcription. Acts as a key regulator of cell growth and proliferation by phosphorylating FNIP1, TSC2, RPTOR, WDR24 and ATG1/ULK1: in response to nutrient limitation, negatively regulates the mTORC1 complex by phosphorylating RPTOR component of the mTORC1 complex and by phosphorylating and activating TSC2. Also phosphorylates and inhibits GATOR2 subunit WDR24 in response to nutrient limitation, leading to suppress glucose-mediated mTORC1 activation. In response to energetic stress, phosphorylates FNIP1, inactivating the non-canonical mTORC1 signaling, thereby promoting nuclear translocation of TFEB and TFE3, and inducing transcription of lysosomal or autophagy genes. In response to nutrient limitation, promotes autophagy by phosphorylating and activating ATG1/ULK1. In that process also activates WDR45/WIPI4. Phosphorylates CASP6, thereby preventing its autoprocessing and subsequent activation. In response to nutrient limitation, phosphorylates transcription factor FOXO3 promoting FOXO3 mitochondrial import. Also acts as a regulator of cellular polarity by remodeling the actin cytoskeleton; probably by indirectly activating myosin. AMPK also acts as a regulator of circadian rhythm by mediating phosphorylation of CRY1, leading to destabilize it. May regulate the Wnt signaling pathway by phosphorylating CTNNB1, leading to stabilize it. Also has tau-protein kinase activity: in response to amyloid beta A4 protein (APP) exposure, activated by CAMKK2, leading to phosphorylation of MAPT/TAU; however the relevance of such data remains unclear in vivo. Also phosphorylates CFTR, EEF2K, KLC1, NOS3 and SLC12A1. Regulates hepatic lipogenesis. Activated via SIRT3, represses sterol regulatory element-binding protein (SREBP) transcriptional activities and ATP-consuming lipogenesis to restore cellular energy balance. Upon stress, regulates mitochondrial fragmentation through phosphorylation of MTFR1L. The protein is 5'-AMP-activated protein kinase catalytic subunit alpha-1 (PRKAA1) of Sus scrofa (Pig).